Here is a 454-residue protein sequence, read N- to C-terminus: UPF0210 protein EUBELI_01067 (454 aa).

Belongs to the UPF0210 family. Homodimer.

The polypeptide is UPF0210 protein EUBELI_01067 (Lachnospira eligens (strain ATCC 27750 / DSM 3376 / VPI C15-48 / C15-B4) (Eubacterium eligens)).